Reading from the N-terminus, the 134-residue chain is ATP synthase epsilon chain (134 aa).

Belongs to the ATPase epsilon chain family. F-type ATPases have 2 components, CF(1) - the catalytic core - and CF(0) - the membrane proton channel. CF(1) has five subunits: alpha(3), beta(3), gamma(1), delta(1), epsilon(1). CF(0) has three main subunits: a, b and c.

Its subcellular location is the cell membrane. Functionally, produces ATP from ADP in the presence of a proton gradient across the membrane. This is ATP synthase epsilon chain from Pelotomaculum thermopropionicum (strain DSM 13744 / JCM 10971 / SI).